An 88-amino-acid chain; its full sequence is Apolipoprotein C-I (88 aa).

The signal sequence occupies residues 1-26; sequence MRLFLSLPVLVVVLAMVLEGPAPTQA.

Belongs to the apolipoprotein C1 family.

It is found in the secreted. Functionally, inhibitor of lipoprotein binding to the low density lipoprotein (LDL) receptor, LDL receptor-related protein, and very low density lipoprotein (VLDL) receptor. Associates with high density lipoproteins (HDL) and the triacylglycerol-rich lipoproteins in the plasma and makes up about 10% of the protein of the VLDL and 2% of that of HDL. Appears to interfere directly with fatty acid uptake and is also the major plasma inhibitor of cholesteryl ester transfer protein (CETP). Binds free fatty acids and reduces their intracellular esterification. Modulates the interaction of APOE with beta-migrating VLDL and inhibits binding of beta-VLDL to the LDL receptor-related protein. This is Apolipoprotein C-I (APOC1) from Leptonychotes weddellii (Weddell seal).